The sequence spans 248 residues: B-box zinc finger protein 24 (248 aa).

Cys-5, Cys-8, Cys-28, His-33, Cys-57, Cys-60, Cys-80, and His-85 together coordinate Zn(2+). The B box-type 1; atypical zinc finger occupies 5–47 (CDVCEKAPATVICCADEAALCPQCDIEIHAANKLASKHQRLHL). A B box-type 2; atypical zinc finger spans residues 57-99 (CDICQEKAAFIFCVEDRALLCRDCDESIHVANSRSANHQRFLA). Residues 115–148 (IEKNQPEPSNNQQKANQIPAKSTSQQQQQPSSAT) form a disordered region. The span at 120–130 (PEPSNNQQKAN) shows a compositional bias: polar residues. Over residues 131 to 148 (QIPAKSTSQQQQQPSSAT) the composition is skewed to low complexity. The short motif at 226 to 229 (KKPR) is the Nuclear localization signal element. The interaction with COP1 stretch occupies residues 236–248 (DDDEEHFIVPDLG).

Interacts with COP1 WD40 domain. Interacts with HY5 and HYH. Interacts with RCD1 and TRP4. In terms of processing, COP1-mediated ubiquitination and subsequent proteasomal degradation of BBX24/STO occurs in the dark. In terms of tissue distribution, high expression in leaves and lower in roots and flowers.

The protein resides in the nucleus. Its function is as follows. Acts as a negative regulator of seedling photomorphogenesis and light-regulated inhibition of hypocotyl elongation. BBX24/STO and BBX25/STH function as transcriptional corepressors of HY5 activity, leading to the down-regulation of BBX22 expression. BBX24/STO acts additively with BBX25/STH during de-etiolation and the hypocotyl shade avoidance response. Functions as a negative regulator of photomorphogenic UV-B responses by interacting with both COP1 and HY5. May act as a transcription factor in the salt-stress response. The sequence is that of B-box zinc finger protein 24 from Arabidopsis thaliana (Mouse-ear cress).